The following is a 234-amino-acid chain: Coiled-coil domain-containing protein 194 (234 aa).

The N-terminal stretch at M1–A43 is a signal peptide. The segment at R44–S63 is disordered. Residues V67–A171 adopt a coiled-coil conformation. The interval G194–Q234 is disordered. Positions R203 to K219 are enriched in basic residues.

This is Coiled-coil domain-containing protein 194 from Mus musculus (Mouse).